Here is a 527-residue protein sequence, read N- to C-terminus: Bifunctional purine biosynthesis protein PurH (527 aa).

The MGS-like domain maps to 1–149; that stretch reads MASDFLPVRR…KNFARVAVAT (149 aa).

The protein belongs to the PurH family.

The catalysed reaction is (6R)-10-formyltetrahydrofolate + 5-amino-1-(5-phospho-beta-D-ribosyl)imidazole-4-carboxamide = 5-formamido-1-(5-phospho-D-ribosyl)imidazole-4-carboxamide + (6S)-5,6,7,8-tetrahydrofolate. It catalyses the reaction IMP + H2O = 5-formamido-1-(5-phospho-D-ribosyl)imidazole-4-carboxamide. The protein operates within purine metabolism; IMP biosynthesis via de novo pathway; 5-formamido-1-(5-phospho-D-ribosyl)imidazole-4-carboxamide from 5-amino-1-(5-phospho-D-ribosyl)imidazole-4-carboxamide (10-formyl THF route): step 1/1. It functions in the pathway purine metabolism; IMP biosynthesis via de novo pathway; IMP from 5-formamido-1-(5-phospho-D-ribosyl)imidazole-4-carboxamide: step 1/1. The polypeptide is Bifunctional purine biosynthesis protein PurH (Xanthomonas oryzae pv. oryzae (strain MAFF 311018)).